A 232-amino-acid chain; its full sequence is tRNA-uridine aminocarboxypropyltransferase (232 aa).

Zn(2+) contacts are provided by cysteine 31, cysteine 34, cysteine 41, and cysteine 43. A DXTW motif is present at residues 137 to 140; sequence DGTW.

This sequence belongs to the TDD superfamily. DTWD2 family. TapT subfamily. Monomer in solution.

The catalysed reaction is a uridine in tRNA + S-adenosyl-L-methionine = a 3-[(3S)-3-amino-3-carboxypropyl]uridine in tRNA + S-methyl-5'-thioadenosine + H(+). The enzyme catalyses uridine(47) in tRNA(Phe) + S-adenosyl-L-methionine = 3-[(3S)-3-amino-3-carboxypropyl]uridine(47) in tRNA(Phe) + S-methyl-5'-thioadenosine + H(+). Its activity is regulated as follows. The degree of the acp3U modification at U47 is dependent on the presence of the m7G modification at the preceding nucleotide G46. It also depends on medium conditions. Catalyzes the formation of 3-(3-amino-3-carboxypropyl)uridine (acp3U) at position 47 of tRNAs. Acp3U47 confers thermal stability on tRNA. The chain is tRNA-uridine aminocarboxypropyltransferase from Escherichia coli (strain K12).